The following is a 561-amino-acid chain: Asparagine synthetase [glutamine-hydrolyzing] (561 aa).

Residue cysteine 2 is the For GATase activity of the active site. Residues 2–191 (CGIWALFGSD…PGHYEVLDLK (190 aa)) enclose the Glutamine amidotransferase type-2 domain. L-glutamine contacts are provided by residues 49–53 (RLAVV), 75–77 (NGE), and aspartate 97. In terms of domain architecture, Asparagine synthetase spans 213–536 (HALYDNVEKL…PGRADWLSHY (324 aa)). ATP contacts are provided by residues leucine 256, isoleucine 288, and 363-364 (SG). At lysine 385 the chain carries N6-acetyllysine. The residue at position 545 (threonine 545) is a Phosphothreonine. Serine 557 is subject to Phosphoserine.

It carries out the reaction L-aspartate + L-glutamine + ATP + H2O = L-asparagine + L-glutamate + AMP + diphosphate + H(+). It functions in the pathway amino-acid biosynthesis; L-asparagine biosynthesis; L-asparagine from L-aspartate (L-Gln route): step 1/1. This Homo sapiens (Human) protein is Asparagine synthetase [glutamine-hydrolyzing] (ASNS).